Consider the following 95-residue polypeptide: Aspartyl/glutamyl-tRNA(Asn/Gln) amidotransferase subunit C (95 aa).

The protein belongs to the GatC family. In terms of assembly, heterotrimer of A, B and C subunits.

It catalyses the reaction L-glutamyl-tRNA(Gln) + L-glutamine + ATP + H2O = L-glutaminyl-tRNA(Gln) + L-glutamate + ADP + phosphate + H(+). The catalysed reaction is L-aspartyl-tRNA(Asn) + L-glutamine + ATP + H2O = L-asparaginyl-tRNA(Asn) + L-glutamate + ADP + phosphate + 2 H(+). Functionally, allows the formation of correctly charged Asn-tRNA(Asn) or Gln-tRNA(Gln) through the transamidation of misacylated Asp-tRNA(Asn) or Glu-tRNA(Gln) in organisms which lack either or both of asparaginyl-tRNA or glutaminyl-tRNA synthetases. The reaction takes place in the presence of glutamine and ATP through an activated phospho-Asp-tRNA(Asn) or phospho-Glu-tRNA(Gln). The polypeptide is Aspartyl/glutamyl-tRNA(Asn/Gln) amidotransferase subunit C (Campylobacter concisus (strain 13826)).